Reading from the N-terminus, the 364-residue chain is Methylenetetrahydrofolate--tRNA-(uracil-5-)-methyltransferase TrmFO (364 aa).

Position 11-16 (11-16) interacts with FAD; sequence GAGLAG. A compositionally biased stretch (polar residues) spans 335–352; sequence SYLNQPCSSANDPTSSLL. The interval 335–364 is disordered; it reads SYLNQPCSSANDPTSSLLDRSPAQRDIPLQ.

The protein belongs to the MnmG family. TrmFO subfamily. The cofactor is FAD.

The protein localises to the cytoplasm. The enzyme catalyses uridine(54) in tRNA + (6R)-5,10-methylene-5,6,7,8-tetrahydrofolate + NADH + H(+) = 5-methyluridine(54) in tRNA + (6S)-5,6,7,8-tetrahydrofolate + NAD(+). It catalyses the reaction uridine(54) in tRNA + (6R)-5,10-methylene-5,6,7,8-tetrahydrofolate + NADPH + H(+) = 5-methyluridine(54) in tRNA + (6S)-5,6,7,8-tetrahydrofolate + NADP(+). Catalyzes the folate-dependent formation of 5-methyl-uridine at position 54 (M-5-U54) in all tRNAs. This Prochlorococcus marinus (strain MIT 9313) protein is Methylenetetrahydrofolate--tRNA-(uracil-5-)-methyltransferase TrmFO.